The chain runs to 116 residues: Regulator of ribonuclease activity B (116 aa).

This sequence belongs to the RraB family. As to quaternary structure, interacts with the C-terminal region of Rne.

It is found in the cytoplasm. Functionally, globally modulates RNA abundance by binding to RNase E (Rne) and regulating its endonucleolytic activity. Can modulate Rne action in a substrate-dependent manner by altering the composition of the degradosome. This chain is Regulator of ribonuclease activity B, found in Colwellia psychrerythraea (strain 34H / ATCC BAA-681) (Vibrio psychroerythus).